We begin with the raw amino-acid sequence, 293 residues long: tRNA pseudouridine synthase B (293 aa).

Catalysis depends on aspartate 39, which acts as the Nucleophile.

This sequence belongs to the pseudouridine synthase TruB family. Type 1 subfamily.

It carries out the reaction uridine(55) in tRNA = pseudouridine(55) in tRNA. Responsible for synthesis of pseudouridine from uracil-55 in the psi GC loop of transfer RNAs. The protein is tRNA pseudouridine synthase B of Thermobifida fusca (strain YX).